Here is a 94-residue protein sequence, read N- to C-terminus: Gibberellin-regulated protein 11 (94 aa).

A signal peptide spans 1–23 (MAVFRVLLASLLISLLVLDFVHA).

Belongs to the GASA family. Post-translationally, six disulfide bonds may be present.

The protein resides in the secreted. Gibberellin-regulated protein that may function in hormonal controlled steps of development such as seed germination, flowering and seed maturation. In Arabidopsis thaliana (Mouse-ear cress), this protein is Gibberellin-regulated protein 11 (GASA11).